The following is a 138-amino-acid chain: MATILVDVVSAEASIFSGQAKFVALPGESGELGILPGHTPLITRIQPGAVRIEKEDGGEEFVFVAGGILEVQPQHVTVLADTAIRGTDLDEAKASEAKRAAEEMLQNQSSDLDLARAQSELAVAAAQLAAIARLRRKK.

This sequence belongs to the ATPase epsilon chain family. As to quaternary structure, F-type ATPases have 2 components, CF(1) - the catalytic core - and CF(0) - the membrane proton channel. CF(1) has five subunits: alpha(3), beta(3), gamma(1), delta(1), epsilon(1). CF(0) has three main subunits: a, b and c.

It localises to the cell inner membrane. Functionally, produces ATP from ADP in the presence of a proton gradient across the membrane. The polypeptide is ATP synthase epsilon chain (Cupriavidus metallidurans (strain ATCC 43123 / DSM 2839 / NBRC 102507 / CH34) (Ralstonia metallidurans)).